We begin with the raw amino-acid sequence, 287 residues long: Probable ABC transporter extracellular-binding protein YckB (287 aa).

The signal sequence occupies residues 1 to 24 (MKSFMHSKAVIFSFTMAFFLILAA). Cys25 carries N-palmitoyl cysteine lipidation. Cys25 carries the S-diacylglycerol cysteine lipid modification.

Belongs to the bacterial solute-binding protein 3 family.

The protein localises to the cell membrane. Its function is as follows. Probably part of a binding-protein-dependent transport system. In Bacillus subtilis (strain 168), this protein is Probable ABC transporter extracellular-binding protein YckB (yckB).